A 211-amino-acid polypeptide reads, in one-letter code: Xanthine phosphoribosyltransferase (211 aa).

Residues L31 and N38 each coordinate xanthine. Position 138 to 142 (138 to 142) interacts with 5-phospho-alpha-D-ribose 1-diphosphate; that stretch reads ANGRT. Xanthine is bound at residue K166.

This sequence belongs to the purine/pyrimidine phosphoribosyltransferase family. Xpt subfamily. Homodimer.

Its subcellular location is the cytoplasm. The enzyme catalyses XMP + diphosphate = xanthine + 5-phospho-alpha-D-ribose 1-diphosphate. The protein operates within purine metabolism; XMP biosynthesis via salvage pathway; XMP from xanthine: step 1/1. In terms of biological role, converts the preformed base xanthine, a product of nucleic acid breakdown, to xanthosine 5'-monophosphate (XMP), so it can be reused for RNA or DNA synthesis. The polypeptide is Xanthine phosphoribosyltransferase (Chloroflexus aurantiacus (strain ATCC 29364 / DSM 637 / Y-400-fl)).